The following is a 121-amino-acid chain: Large ribosomal subunit protein uL22c (121 aa).

It belongs to the universal ribosomal protein uL22 family. As to quaternary structure, part of the 50S ribosomal subunit.

The protein resides in the plastid. It is found in the chloroplast. In terms of biological role, this protein binds specifically to 23S rRNA. The globular domain of the protein is located near the polypeptide exit tunnel on the outside of the subunit, while an extended beta-hairpin is found that lines the wall of the exit tunnel in the center of the 70S ribosome. The polypeptide is Large ribosomal subunit protein uL22c (rpl22) (Welwitschia mirabilis (Tree tumbo)).